Consider the following 396-residue polypeptide: Elongation factor Tu (396 aa).

Residues 10 to 206 form the tr-type G domain; the sequence is KPHVNVGTIG…ALDTYIPTPE (197 aa). The tract at residues 19-26 is G1; that stretch reads GHVDHGKT. A GTP-binding site is contributed by 19 to 26; the sequence is GHVDHGKT. Thr26 is a Mg(2+) binding site. The G2 stretch occupies residues 60 to 64; it reads GITIN. The tract at residues 81 to 84 is G3; that stretch reads DCPG. GTP contacts are provided by residues 81–85 and 136–139; these read DCPGH and NKCD. The G4 stretch occupies residues 136–139; sequence NKCD. A G5 region spans residues 174–176; that stretch reads SAK.

It belongs to the TRAFAC class translation factor GTPase superfamily. Classic translation factor GTPase family. EF-Tu/EF-1A subfamily. Monomer.

It is found in the cytoplasm. The enzyme catalyses GTP + H2O = GDP + phosphate + H(+). Functionally, GTP hydrolase that promotes the GTP-dependent binding of aminoacyl-tRNA to the A-site of ribosomes during protein biosynthesis. The chain is Elongation factor Tu from Burkholderia vietnamiensis (strain G4 / LMG 22486) (Burkholderia cepacia (strain R1808)).